The chain runs to 376 residues: Lipid-A-disaccharide synthase (376 aa).

This sequence belongs to the LpxB family.

It carries out the reaction a lipid X + a UDP-2-N,3-O-bis[(3R)-3-hydroxyacyl]-alpha-D-glucosamine = a lipid A disaccharide + UDP + H(+). The protein operates within bacterial outer membrane biogenesis; LPS lipid A biosynthesis. Its function is as follows. Condensation of UDP-2,3-diacylglucosamine and 2,3-diacylglucosamine-1-phosphate to form lipid A disaccharide, a precursor of lipid A, a phosphorylated glycolipid that anchors the lipopolysaccharide to the outer membrane of the cell. This Coxiella burnetii (strain RSA 331 / Henzerling II) protein is Lipid-A-disaccharide synthase.